Reading from the N-terminus, the 551-residue chain is TRAF3-interacting JNK-activating modulator (551 aa).

At 1 to 526 the chain is on the cytoplasmic side; it reads MISPDPRPSP…QLPPRRQCGR (526 aa). 2 disordered regions span residues 73–95 and 140–178; these read LEEKGKAQHPQAREQGPSRRPGQ and DHLSSQAGGLPPQDTPIKKPPKHHRGTQTKAEGPTIKND. Coiled coils occupy residues 240–436 and 464–506; these read DKLK…LLTK and WDLR…RKLQ. A helical; Anchor for type IV membrane protein membrane pass occupies residues 527 to 544; the sequence is WLPVLMVVIAAALAVFLA. Residues 545 to 551 are Extracellular-facing; sequence NKDNLMI.

In terms of assembly, interacts (via its coiled-coil domain) with TRAF3 (via isoleucine zipper). Interacts with MAP2K1. Interacts with PPP2CA; this interaction targets PPP2CA to the lysosomes. Interacts with TLR4. Interacts with MAVS. Interacts with TBK1.

It localises to the cell membrane. It is found in the golgi apparatus membrane. The protein resides in the lysosome membrane. The protein localises to the mitochondrion outer membrane. Functionally, adapter protein that plays essential roles in both innate and adaptive immunity. Plays a crucial role in the regulation of thymocyte development. Mechanistically, mediates TCR-stimulated activation through recruiting MAP2K1/MEK1 to the Golgi and, thereby, facilitating the interaction of MAP2K1/MEK1 with its activator BRAF. Also plays an essential role in regulatory T-cell stability and function by recruiting the serine-threonine phosphatase catalytic subunit (PPP2CA) to the lysosome, thereby facilitating the interaction of PP2Ac with the mTORC1 component RPTOR and restricting glycolytic metabolism. Positively regulates TLR4 signaling activity in macrophage-mediated inflammation by acting as a molecular clamp to facilitate LPS-induced translocation of TLR4 to lipid rafts. In response to viral infection, facilitates the recruitment of TRAF3 to MAVS within mitochondria leading to IRF3 activation and interferon production. However, participates in the maintenance of immune homeostasis and the prevention of overzealous innate immunity by promoting 'Lys-48'-dependent ubiquitination of TBK1. This chain is TRAF3-interacting JNK-activating modulator (TRAF3IP3), found in Homo sapiens (Human).